Reading from the N-terminus, the 349-residue chain is sn-glycerol-3-phosphate import ATP-binding protein UgpC (349 aa).

The region spanning 4–235 (VTLTAVRKVY…PASTFVASFM (232 aa)) is the ABC transporter domain. Position 37 to 44 (37 to 44 (GPSGCGKS)) interacts with ATP.

The protein belongs to the ABC transporter superfamily. sn-glycerol-3-phosphate importer (TC 3.A.1.1.3) family. In terms of assembly, the complex is composed of two ATP-binding proteins (UgpC), two transmembrane proteins (UgpA and UgpE) and a solute-binding protein (UgpB).

The protein localises to the cell inner membrane. The catalysed reaction is sn-glycerol 3-phosphate(out) + ATP + H2O = sn-glycerol 3-phosphate(in) + ADP + phosphate + H(+). Its function is as follows. Part of the ABC transporter complex UgpBAEC involved in sn-glycerol-3-phosphate (G3P) import. Responsible for energy coupling to the transport system. This is sn-glycerol-3-phosphate import ATP-binding protein UgpC from Jannaschia sp. (strain CCS1).